The chain runs to 61 residues: Large ribosomal subunit protein uL30 (61 aa).

It belongs to the universal ribosomal protein uL30 family. Part of the 50S ribosomal subunit.

In Chlorobium phaeovibrioides (strain DSM 265 / 1930) (Prosthecochloris vibrioformis (strain DSM 265)), this protein is Large ribosomal subunit protein uL30.